Reading from the N-terminus, the 341-residue chain is Dual oxidase maturation factor 1 (341 aa).

Residues 1 to 24 (MAALGHTLPFYTGTKPTFPMDTTL) are Extracellular-facing. A helical membrane pass occupies residues 25-45 (AVIITIFLTALVTFIIILPGI). Over 46-51 (RGKTRL) the chain is Cytoplasmic. The chain crosses the membrane as a helical span at residues 52-72 (FWLLRVVTSLFIGAVILAVNF). Residues 73 to 183 (SSEWSVGHVN…RLAGHYASAM (111 aa)) lie on the Extracellular side of the membrane. N-linked (GlcNAc...) asparagine glycans are attached at residues asparagine 84, asparagine 109, and asparagine 121. A helical membrane pass occupies residues 184 to 204 (LWVAFLCWLLANVMLSMPVLV). Residue tyrosine 205 is a topological domain, cytoplasmic. The chain crosses the membrane as a helical span at residues 206 to 226 (GGHMLLATGLFQLLALFFFSM). The Extracellular portion of the chain corresponds to 227–249 (TTSLISPCPLRLGTAVLHTHHGP). The chain crosses the membrane as a helical span at residues 250–270 (AFWITLATGLLCILLGLVMAV). The Cytoplasmic segment spans residues 271–341 (AHRMQPHRLK…EHPKESDCSL (71 aa)).

This sequence belongs to the DUOXA family. In terms of assembly, may interact with NUMB.

Its subcellular location is the membrane. Its function is as follows. May be required for the maturation and the transport from the endoplasmic reticulum to the plasma membrane of functional DUOX1. This is Dual oxidase maturation factor 1 (Duoxa1) from Mus musculus (Mouse).